The primary structure comprises 348 residues: Phosphate acyltransferase (348 aa).

It belongs to the PlsX family. As to quaternary structure, homodimer. Probably interacts with PlsY.

Its subcellular location is the cytoplasm. The enzyme catalyses a fatty acyl-[ACP] + phosphate = an acyl phosphate + holo-[ACP]. Its pathway is lipid metabolism; phospholipid metabolism. Its function is as follows. Catalyzes the reversible formation of acyl-phosphate (acyl-PO(4)) from acyl-[acyl-carrier-protein] (acyl-ACP). This enzyme utilizes acyl-ACP as fatty acyl donor, but not acyl-CoA. The protein is Phosphate acyltransferase of Pectobacterium atrosepticum (strain SCRI 1043 / ATCC BAA-672) (Erwinia carotovora subsp. atroseptica).